We begin with the raw amino-acid sequence, 376 residues long: MASYPCHQHASAFDQAARSRGHSNRRTALRPRRQQEATEVRLEQKMPTLLRVYIDGPHGMGKTTTTQLLVALGSRDDIVYVPEPMTYWQVLGASETIANIYTTQHRLDQGEISAGDAAVVMTSAQITMGMPYAVTDAVLAPHVGGEAGSSHAPPPALTLIFDRHPIAALLCYPAARYLMGSMTPQAVLAFVALIPPTLPGTNIVLGALPEDRHIDRLAKRQRPGERLDLAMLAAIRRVYGLLANTVRYLQGGGSWWEDWGQLSGTAVPPQGAEPQSNAGPRPHIGDTLFTLFRAPELLAPNGDLYNVFAWALDVLAKRLRPMHVFILDYDQSPAGCRDALLQLTSGMVQTHVTTPGSIPTICDLARTFAREMGEAN.

The tract at residues 1 to 39 (MASYPCHQHASAFDQAARSRGHSNRRTALRPRRQQEATE) is disordered. Residues 19–32 (SRGHSNRRTALRPR) show a composition bias toward basic residues. 56-63 (GPHGMGKT) contributes to the ATP binding site. Catalysis depends on Glu-83, which acts as the Proton acceptor. Residues Tyr-101 and Gln-125 each coordinate substrate. Residue Arg-216 coordinates ATP. Residue Arg-222 coordinates substrate.

The protein belongs to the herpesviridae thymidine kinase family. Homodimer.

The enzyme catalyses thymidine + ATP = dTMP + ADP + H(+). Catalyzes the transfer of the gamma-phospho group of ATP to thymidine to generate dTMP in the salvage pathway of pyrimidine synthesis. The dTMP serves as a substrate for DNA polymerase during viral DNA replication. Allows the virus to be reactivated and to grow in non-proliferative cells lacking a high concentration of phosphorylated nucleic acid precursors. The protein is Thymidine kinase of Human herpesvirus 1 (strain CL101) (HHV-1).